A 118-amino-acid chain; its full sequence is Large ribosomal subunit protein bL20 (118 aa).

It belongs to the bacterial ribosomal protein bL20 family.

In terms of biological role, binds directly to 23S ribosomal RNA and is necessary for the in vitro assembly process of the 50S ribosomal subunit. It is not involved in the protein synthesizing functions of that subunit. The sequence is that of Large ribosomal subunit protein bL20 from Cupriavidus metallidurans (strain ATCC 43123 / DSM 2839 / NBRC 102507 / CH34) (Ralstonia metallidurans).